The following is a 534-amino-acid chain: MSLRPSERAEVRRSRYKVAVDADEGRRRREDNMVEIRKSRREESLLKKRRDGLPAAAAAAAAASPLLAHSSALQQKLEGLPAMVQAVQSDDSAVQLEATTQFRKLLSIERSPPIEEVINTGVVPRFIAFLQREDYPQLQFEAAWALTNIASGTSDNTKVVVESGAVPIFVKLLSSPSEDVREQAVWALGNVAGDSPKCRDLVLASGGLYPLLQQLNEHAKLSMLRNATWTLSNFCRGKPQPNFEQVKPALSALQRLIHSQDEEVLTDACWALSYLSDGTNDKIQAVIESGVFPRLVELLMHPSASVLIPALRTVGNIVTGDDMQTQCVIDHQALPCLLNLLTNNHKKSIKKEACWTISNITAGNREQIQAVINANIIAPLVHLLQTAEFDIKKEAAWAISNATSGGTHDQIKYLVAQGCIKPLCDLLVCPDPRIVTVCLEGLENILKVGEAEKNLGAGDVNSYAQMIDDAEGLEKIENLQSHDNTEIYEKAVKMLESYWLEEEDDAMPSGDNAQNGFNFGNQQPNVPSGGFNFG.

Residues 1-58 (MSLRPSERAEVRRSRYKVAVDADEGRRRREDNMVEIRKSRREESLLKKRRDGLPAAAA) form the IBB domain. 8 ARM repeats span residues 111–151 (SPPI…NIAS), 154–193 (SDNT…NVAG), 196–236 (PKCR…NFCR), 238–277 (KPQP…YLSD), 280–319 (NDKI…NIVT), 322–362 (DMQT…NITA), 365–404 (REQI…NATS), and 408–447 (HDQI…NILK). The tract at residues 505–534 (DAMPSGDNAQNGFNFGNQQPNVPSGGFNFG) is disordered. Residues 514 to 523 (QNGFNFGNQQ) show a composition bias toward low complexity.

It belongs to the importin alpha family. In terms of assembly, forms a complex with importin subunit beta-1. The whole complex, most stable and composed of importin alpha and importin beta, is referred to as PTAC or pore targeting complex. As to expression, highly expressed in root and weakly in callus, etiolated leaf and green leaf.

It is found in the cytoplasm. The protein localises to the perinuclear region. Its function is as follows. Functions in nuclear protein import. Binds specifically and directly to substrates containing either a simple or bipartite NLS motif. Promotes docking of import substrates to the nuclear envelope. In conjunction with importin beta-1, mediates the nuclear envelope docking, and the subsequent translocation into the nucleus of the constitutive morphogenetic 1 (COP1) protein containing bipartite NLS motif. In Oryza sativa subsp. japonica (Rice), this protein is Importin subunit alpha-1b.